The sequence spans 159 residues: SsrA-binding protein (159 aa).

The protein belongs to the SmpB family.

Its subcellular location is the cytoplasm. Functionally, required for rescue of stalled ribosomes mediated by trans-translation. Binds to transfer-messenger RNA (tmRNA), required for stable association of tmRNA with ribosomes. tmRNA and SmpB together mimic tRNA shape, replacing the anticodon stem-loop with SmpB. tmRNA is encoded by the ssrA gene; the 2 termini fold to resemble tRNA(Ala) and it encodes a 'tag peptide', a short internal open reading frame. During trans-translation Ala-aminoacylated tmRNA acts like a tRNA, entering the A-site of stalled ribosomes, displacing the stalled mRNA. The ribosome then switches to translate the ORF on the tmRNA; the nascent peptide is terminated with the 'tag peptide' encoded by the tmRNA and targeted for degradation. The ribosome is freed to recommence translation, which seems to be the essential function of trans-translation. This is SsrA-binding protein from Coxiella burnetii (strain RSA 493 / Nine Mile phase I).